Reading from the N-terminus, the 539-residue chain is GMP synthase [glutamine-hydrolyzing] (539 aa).

Residues 4–202 (KILILDFGSQ…VLGIAGCKPD (199 aa)) form the Glutamine amidotransferase type-1 domain. Residue Cys-81 is the Nucleophile of the active site. Catalysis depends on residues His-176 and Glu-178. Residues 203 to 395 (WVMRDHIEEA…LGLPPEMVYR (193 aa)) form the GMPS ATP-PPase domain. 230 to 236 (SGGVDSS) lines the ATP pocket.

In terms of assembly, homodimer.

It catalyses the reaction XMP + L-glutamine + ATP + H2O = GMP + L-glutamate + AMP + diphosphate + 2 H(+). Its pathway is purine metabolism; GMP biosynthesis; GMP from XMP (L-Gln route): step 1/1. Catalyzes the synthesis of GMP from XMP. The protein is GMP synthase [glutamine-hydrolyzing] of Cupriavidus necator (strain ATCC 17699 / DSM 428 / KCTC 22496 / NCIMB 10442 / H16 / Stanier 337) (Ralstonia eutropha).